Here is a 120-residue protein sequence, read N- to C-terminus: NAD(P)H-quinone oxidoreductase subunit 3, chloroplastic (120 aa).

Helical transmembrane passes span 9–29, 64–84, and 88–108; these read IFWT…WISG, MFAL…PWAM, and VLGV…VVGL.

This sequence belongs to the complex I subunit 3 family. In terms of assembly, NDH is composed of at least 16 different subunits, 5 of which are encoded in the nucleus.

The protein resides in the plastid. The protein localises to the chloroplast thylakoid membrane. The enzyme catalyses a plastoquinone + NADH + (n+1) H(+)(in) = a plastoquinol + NAD(+) + n H(+)(out). It carries out the reaction a plastoquinone + NADPH + (n+1) H(+)(in) = a plastoquinol + NADP(+) + n H(+)(out). NDH shuttles electrons from NAD(P)H:plastoquinone, via FMN and iron-sulfur (Fe-S) centers, to quinones in the photosynthetic chain and possibly in a chloroplast respiratory chain. The immediate electron acceptor for the enzyme in this species is believed to be plastoquinone. Couples the redox reaction to proton translocation, and thus conserves the redox energy in a proton gradient. This chain is NAD(P)H-quinone oxidoreductase subunit 3, chloroplastic, found in Brachypodium distachyon (Purple false brome).